The following is a 320-amino-acid chain: NAD-dependent protein deacylase SIR2rp2 (320 aa).

The N-terminal 22 residues, 1 to 22, are a transit peptide targeting the mitochondrion; it reads MRPAGTLASFLERCSARKRGRG. Residues 23 to 320 enclose the Deacetylase sirtuin-type domain; that stretch reads CVVLTGAGCS…MFFRRKTIQL (298 aa). NAD(+)-binding positions include 28–48 and 108–111; these read GAGC…GQYH and QNVD. The Proton acceptor role is filled by His144. Zn(2+)-binding residues include Cys152, Cys155, Cys207, and Cys210. NAD(+) contacts are provided by residues 248–250, 274–276, and Gly294; these read GTS and NAG.

This sequence belongs to the sirtuin family. Class II subfamily. It depends on Zn(2+) as a cofactor.

It is found in the mitochondrion matrix. The enzyme catalyses N(6)-acetyl-L-lysyl-[protein] + NAD(+) + H2O = 2''-O-acetyl-ADP-D-ribose + nicotinamide + L-lysyl-[protein]. NAD-dependent protein deacylase. Catalyzes the NAD-dependent hydrolysis of acyl groups from lysine residues. This is NAD-dependent protein deacylase SIR2rp2 (SIR2rp2) from Leishmania major.